Here is a 46-residue protein sequence, read N- to C-terminus: Elongation factor Tu (46 aa).

The segment covering 1-10 (MAKGKFERSK) has biased composition (basic and acidic residues). Residues 1–20 (MAKGKFERSKPHVNVGTIGH) are disordered. 19–26 (GHVDHGKT) contacts GTP.

The protein belongs to the GTP-binding elongation factor family. EF-Tu/EF-1A subfamily. Monomer.

The protein resides in the cytoplasm. Its function is as follows. This protein promotes the GTP-dependent binding of aminoacyl-tRNA to the A-site of ribosomes during protein biosynthesis. This chain is Elongation factor Tu (tufA), found in Eikenella corrodens.